The sequence spans 208 residues: NAD(P)H-quinone oxidoreductase subunit I (208 aa).

4Fe-4S ferredoxin-type domains are found at residues G55 to V84 and R95 to E124. Positions 64, 67, 70, 74, 104, 107, 110, and 114 each coordinate [4Fe-4S] cluster.

The protein belongs to the complex I 23 kDa subunit family. NDH-1 is composed of at least 11 different subunits. [4Fe-4S] cluster is required as a cofactor.

Its subcellular location is the cellular thylakoid membrane. The catalysed reaction is a plastoquinone + NADH + (n+1) H(+)(in) = a plastoquinol + NAD(+) + n H(+)(out). It carries out the reaction a plastoquinone + NADPH + (n+1) H(+)(in) = a plastoquinol + NADP(+) + n H(+)(out). NDH-1 shuttles electrons from an unknown electron donor, via FMN and iron-sulfur (Fe-S) centers, to quinones in the respiratory and/or the photosynthetic chain. The immediate electron acceptor for the enzyme in this species is believed to be plastoquinone. Couples the redox reaction to proton translocation, and thus conserves the redox energy in a proton gradient. The sequence is that of NAD(P)H-quinone oxidoreductase subunit I from Prochlorococcus marinus (strain MIT 9515).